Consider the following 62-residue polypeptide: Small ribosomal subunit protein bS21 (62 aa).

A compositionally biased stretch (basic and acidic residues) spans 43-52 (VKKKLKSEAA). The disordered stretch occupies residues 43–62 (VKKKLKSEAARKRKNRRRFK). Positions 53–62 (RKRKNRRRFK) are enriched in basic residues.

It belongs to the bacterial ribosomal protein bS21 family.

The polypeptide is Small ribosomal subunit protein bS21 (Lactiplantibacillus plantarum (strain ATCC BAA-793 / NCIMB 8826 / WCFS1) (Lactobacillus plantarum)).